The chain runs to 190 residues: Interferon alpha-11 (190 aa).

A signal peptide spans 1 to 23 (MARLCAFLMILIVMSYWSTCSLG). 2 cysteine pairs are disulfide-bonded: C24-C122 and C52-C162. The N-linked (GlcNAc...) asparagine glycan is linked to N101.

This sequence belongs to the alpha/beta interferon family. N-glycosylated.

The protein resides in the secreted. Has antiviral and antiproliferative activities. Produced by macrophages and stimulates the production of two enzymes: a protein kinase and an oligoadenylate synthetase. During viral infection, mediates antiviral effect, either directly by inducing interferon-stimulated genes, either indirectly through stimulation of natural killer cells enabling them to control viral replication. This chain is Interferon alpha-11 (Ifna11), found in Mus musculus (Mouse).